The primary structure comprises 203 residues: Holliday junction branch migration complex subunit RuvA (203 aa).

Residues 1–64 (MIGRLRGIIL…EDAQLLYGFN (64 aa)) form a domain I region. The interval 65–142 (NKQERTLFKE…KGLHGDLFTP (78 aa)) is domain II. The flexible linker stretch occupies residues 143–154 (AVDLVLTSPASP). Residues 155–203 (TSEDAEQEAVAALVALGYKPQEASRMVNKIARPDASSETLIRDALRAAL) form a domain III region.

The protein belongs to the RuvA family. Homotetramer. Forms an RuvA(8)-RuvB(12)-Holliday junction (HJ) complex. HJ DNA is sandwiched between 2 RuvA tetramers; dsDNA enters through RuvA and exits via RuvB. An RuvB hexamer assembles on each DNA strand where it exits the tetramer. Each RuvB hexamer is contacted by two RuvA subunits (via domain III) on 2 adjacent RuvB subunits; this complex drives branch migration. In the full resolvosome a probable DNA-RuvA(4)-RuvB(12)-RuvC(2) complex forms which resolves the HJ.

The protein resides in the cytoplasm. The RuvA-RuvB-RuvC complex processes Holliday junction (HJ) DNA during genetic recombination and DNA repair, while the RuvA-RuvB complex plays an important role in the rescue of blocked DNA replication forks via replication fork reversal (RFR). RuvA specifically binds to HJ cruciform DNA, conferring on it an open structure. The RuvB hexamer acts as an ATP-dependent pump, pulling dsDNA into and through the RuvAB complex. HJ branch migration allows RuvC to scan DNA until it finds its consensus sequence, where it cleaves and resolves the cruciform DNA. The protein is Holliday junction branch migration complex subunit RuvA of Salmonella choleraesuis (strain SC-B67).